The sequence spans 304 residues: Bacteriochlorophyll synthase 33 kDa chain (304 aa).

The next 9 helical transmembrane spans lie at 26-46 (VTWF…NVPI), 51-71 (GVVV…SQAA), 94-114 (IPGL…LVVG), 117-137 (LGSW…AYSV), 151-171 (GLVG…VLLA), 178-198 (GFPI…IMTI), 227-247 (IACT…YLFS), 250-270 (YHAT…SVWM), and 279-299 (WYNG…AFAI).

It localises to the cell membrane. Its pathway is porphyrin-containing compound metabolism; bacteriochlorophyll biosynthesis (light-independent). In terms of biological role, catalyzes the esterification of bacteriochlorophyllide a by geranylgeraniol-PPi. The polypeptide is Bacteriochlorophyll synthase 33 kDa chain (bchG) (Rhodobacter capsulatus (strain ATCC BAA-309 / NBRC 16581 / SB1003)).